The following is a 320-amino-acid chain: Ferrochelatase (320 aa).

2 residues coordinate Fe cation: His194 and Glu275.

This sequence belongs to the ferrochelatase family. As to quaternary structure, monomer.

The protein localises to the cytoplasm. The enzyme catalyses heme b + 2 H(+) = protoporphyrin IX + Fe(2+). It participates in porphyrin-containing compound metabolism; protoheme biosynthesis; protoheme from protoporphyrin-IX: step 1/1. In terms of biological role, catalyzes the ferrous insertion into protoporphyrin IX. This Escherichia coli O81 (strain ED1a) protein is Ferrochelatase.